The sequence spans 458 residues: Retinoic acid receptor alpha (458 aa).

The tract at residues 1–86 (MASNGGSCPS…PPPLPRIYKP (86 aa)) is modulating. The segment covering 54–68 (TPSPATIETQSTSSE) has biased composition (polar residues). The interval 54 to 76 (TPSPATIETQSTSSEEIVPSPPS) is disordered. 2 NR C4-type zinc fingers span residues 87–107 (CFVC…CEGC) and 123–147 (CHRD…LQKC). Residues 87–152 (CFVCQDKSSG…RLQKCFEVGM (66 aa)) constitute a DNA-binding region (nuclear receptor). The interval 153–182 (SKESVRNDRNKKKKQEAPKQECTESYIITP) is hinge. An NR LBD domain is found at 183–417 (EVEDLVEKVR…PLIQEMLENS (235 aa)). The 9aaTAD motif lies at 408–416 (PLIQEMLEN). Residues 417–458 (SEGLDSLTGQPPRASSLAPPPGSCSPSLSPSSNRSSPTSHSP) are disordered. Positions 440–458 (CSPSLSPSSNRSSPTSHSP) are enriched in low complexity.

It belongs to the nuclear hormone receptor family. NR1 subfamily. Heterodimer; with an rxr molecule. Binds DNA preferentially as a rar/rxr heterodimer. Expressed in forelimb, in the distal forelimb blastema, kidney, liver and hindlimb blastemal mesenchymal cells.

Its subcellular location is the nucleus. Its function is as follows. Receptor for retinoic acid. Retinoic acid receptors bind as heterodimers to their target response elements in response to their ligands, all-trans or 9-cis retinoic acid, and regulate gene expression in various biological processes. The rar/rxr heterodimers bind to the retinoic acid response elements (RARE) composed of tandem 5'-AGGTCA-3' sites known as DR1-DR5. Retinoic acid signaling appears to be involved in specifying proximal-distal axis in limb regeneration. The protein is Retinoic acid receptor alpha (RARA) of Notophthalmus viridescens (Eastern newt).